A 122-amino-acid chain; its full sequence is S-adenosylmethionine decarboxylase proenzyme (122 aa).

Serine 69 serves as the catalytic Schiff-base intermediate with substrate; via pyruvic acid. Serine 69 bears the Pyruvic acid (Ser); by autocatalysis mark. Histidine 74 acts as the Proton acceptor; for processing activity in catalysis. The active-site Proton donor; for catalytic activity is cysteine 89.

This sequence belongs to the prokaryotic AdoMetDC family. Type 1 subfamily. As to quaternary structure, heterotetramer of two alpha and two beta chains arranged as a dimer of alpha/beta heterodimers. Pyruvate serves as cofactor. In terms of processing, is synthesized initially as an inactive proenzyme. Formation of the active enzyme involves a self-maturation process in which the active site pyruvoyl group is generated from an internal serine residue via an autocatalytic post-translational modification. Two non-identical subunits are generated from the proenzyme in this reaction, and the pyruvate is formed at the N-terminus of the alpha chain, which is derived from the carboxyl end of the proenzyme. The post-translation cleavage follows an unusual pathway, termed non-hydrolytic serinolysis, in which the side chain hydroxyl group of the serine supplies its oxygen atom to form the C-terminus of the beta chain, while the remainder of the serine residue undergoes an oxidative deamination to produce ammonia and the pyruvoyl group blocking the N-terminus of the alpha chain.

It catalyses the reaction S-adenosyl-L-methionine + H(+) = S-adenosyl 3-(methylsulfanyl)propylamine + CO2. It participates in amine and polyamine biosynthesis; S-adenosylmethioninamine biosynthesis; S-adenosylmethioninamine from S-adenosyl-L-methionine: step 1/1. In terms of biological role, catalyzes the decarboxylation of S-adenosylmethionine to S-adenosylmethioninamine (dcAdoMet), the propylamine donor required for the synthesis of the polyamines spermine and spermidine from the diamine putrescine. The polypeptide is S-adenosylmethionine decarboxylase proenzyme (Sulfurisphaera tokodaii (strain DSM 16993 / JCM 10545 / NBRC 100140 / 7) (Sulfolobus tokodaii)).